The primary structure comprises 192 residues: Small ribosomal subunit protein uS5 (192 aa).

The disordered stretch occupies residues 1-21 (MAAERERGGRERGGRDRDERD). The 64-residue stretch at 24–87 (FVDKLVHINR…DSAKRNLTRV (64 aa)) folds into the S5 DRBM domain.

This sequence belongs to the universal ribosomal protein uS5 family. Part of the 30S ribosomal subunit. Contacts proteins S4 and S8.

Functionally, with S4 and S12 plays an important role in translational accuracy. In terms of biological role, located at the back of the 30S subunit body where it stabilizes the conformation of the head with respect to the body. This Afipia carboxidovorans (strain ATCC 49405 / DSM 1227 / KCTC 32145 / OM5) (Oligotropha carboxidovorans) protein is Small ribosomal subunit protein uS5.